We begin with the raw amino-acid sequence, 352 residues long: Molybdenum import ATP-binding protein ModC (352 aa).

Positions 2-230 constitute an ABC transporter domain; sequence MLEINVKKRL…PLFEPWQEQG (229 aa). 32–39 is a binding site for ATP; it reads GISGSGKS. The region spanning 290–352 is the Mop domain; it reads KTSIRNILSG…YAQIKAVSVM (63 aa).

It belongs to the ABC transporter superfamily. Molybdate importer (TC 3.A.1.8) family. As to quaternary structure, the complex is composed of two ATP-binding proteins (ModC), two transmembrane proteins (ModB) and a solute-binding protein (ModA).

Its subcellular location is the cell inner membrane. It carries out the reaction molybdate(out) + ATP + H2O = molybdate(in) + ADP + phosphate + H(+). In terms of biological role, part of the ABC transporter complex ModABC involved in molybdenum import. Responsible for energy coupling to the transport system. The protein is Molybdenum import ATP-binding protein ModC of Mannheimia succiniciproducens (strain KCTC 0769BP / MBEL55E).